The primary structure comprises 657 residues: Wall-associated receptor kinase-like 20 (657 aa).

The signal sequence occupies residues 1–23; sequence MEKKRSYYALLIPTLLTVWLACA. The Extracellular segment spans residues 24–293; that stretch reads GHSCARHAKA…KHCKKKKKTV (270 aa). A glycan (N-linked (GlcNAc...) asparagine) is linked at Asn140. The helical transmembrane segment at 294 to 314 threads the bilayer; sequence VFAGAAVAVVGVTLAIAVAVI. The Cytoplasmic portion of the chain corresponds to 315–657; the sequence is GTKHSHQKVK…NILSQEVTET (343 aa). Residues 363–646 enclose the Protein kinase domain; the sequence is FSKDNLIGTG…KEVADEIEYI (284 aa). ATP-binding positions include 369 to 377 and Lys391; that span reads IGTGGFGEV. Asp490 (proton acceptor) is an active-site residue.

This sequence belongs to the protein kinase superfamily. Ser/Thr protein kinase family.

The protein localises to the membrane. The catalysed reaction is L-seryl-[protein] + ATP = O-phospho-L-seryl-[protein] + ADP + H(+). It carries out the reaction L-threonyl-[protein] + ATP = O-phospho-L-threonyl-[protein] + ADP + H(+). Serine/threonine-protein kinase that may function as a signaling receptor of extracellular matrix component. The sequence is that of Wall-associated receptor kinase-like 20 (WAKL20) from Arabidopsis thaliana (Mouse-ear cress).